We begin with the raw amino-acid sequence, 240 residues long: Sugar fermentation stimulation protein homolog (240 aa).

It belongs to the SfsA family.

The sequence is that of Sugar fermentation stimulation protein homolog from Pasteurella multocida (strain Pm70).